The following is a 293-amino-acid chain: Foldase protein PrsA 2 (293 aa).

The signal sequence occupies residues 1 to 20; sequence MKKKLILGLVMMMALFSLAA. A lipid anchor (N-palmitoyl cysteine) is attached at Cys21. Cys21 carries S-diacylglycerol cysteine lipidation. Residues 135–226 form the PpiC domain; that stretch reads QPDITVSHIL…YGYHIIQMDK (92 aa).

Belongs to the PrsA family.

It is found in the cell membrane. It carries out the reaction [protein]-peptidylproline (omega=180) = [protein]-peptidylproline (omega=0). In terms of biological role, plays a major role in protein secretion by helping the post-translocational extracellular folding of several secreted proteins. The protein is Foldase protein PrsA 2 (prsA2) of Listeria monocytogenes serovar 1/2a (strain ATCC BAA-679 / EGD-e).